A 353-amino-acid chain; its full sequence is MTIALGRFTKDENDLFDIMDDWLRRDRFVFVGWSGLLLFPCAYFALGGWFTGTTFVTSWYTHGLASSYLEGCNFLTAAVSTPANSLAHSLLLLWGPEAQGDFTRWCQLGGLWTFVALHGAFGLIGFMLRQFELARSVQLRPYNAIAFSAPIAVFVSVFLIYPLGQSGWFFAPSFGVAAIFRFILFFQGFHNWTLNPFHMMGVAGVLGAALLCAIHGATVENTLFEDGDGANTFRAFNPTQAEETYSMVTANRFWSQIFGVAFSNKRWLHFFMLFVPVTGLWMSALGVVGLALNLRAYDFVSQEIRAAEDPEFETFYTKNILLNEGIRAWMAAQDQPHENLIFPEEVLPRGNAL.

Thr2 bears the N-acetylthreonine mark. Residue Thr2 is modified to Phosphothreonine. Residues 41-61 (CAYFALGGWFTGTTFVTSWYT) form a helical membrane-spanning segment. His118 contributes to the chlorophyll a binding site. A helical transmembrane segment spans residues 125-141 (GFMLRQFELARSVQLRP). Pheophytin a-binding residues include Gln130 and Asn143. A helical membrane pass occupies residues 153-166 (VFVSVFLIYPLGQS). His198 serves as a coordination point for chlorophyll a. The chain crosses the membrane as a helical span at residues 208–228 (AALLCAIHGATVENTLFEDGD). 2 residues coordinate a plastoquinone: His215 and Phe262. His215 lines the Fe cation pocket. Residue His269 participates in Fe cation binding. The helical transmembrane segment at 279–295 (GLWMSALGVVGLALNLR) threads the bilayer.

The protein belongs to the reaction center PufL/M/PsbA/D family. PSII is composed of 1 copy each of membrane proteins PsbA, PsbB, PsbC, PsbD, PsbE, PsbF, PsbH, PsbI, PsbJ, PsbK, PsbL, PsbM, PsbT, PsbX, PsbY, PsbZ, Psb30/Ycf12, at least 3 peripheral proteins of the oxygen-evolving complex and a large number of cofactors. It forms dimeric complexes. It depends on The D1/D2 heterodimer binds P680, chlorophylls that are the primary electron donor of PSII, and subsequent electron acceptors. It shares a non-heme iron and each subunit binds pheophytin, quinone, additional chlorophylls, carotenoids and lipids. There is also a Cl(-1) ion associated with D1 and D2, which is required for oxygen evolution. The PSII complex binds additional chlorophylls, carotenoids and specific lipids. as a cofactor.

Its subcellular location is the plastid. It is found in the chloroplast thylakoid membrane. The catalysed reaction is 2 a plastoquinone + 4 hnu + 2 H2O = 2 a plastoquinol + O2. In terms of biological role, photosystem II (PSII) is a light-driven water:plastoquinone oxidoreductase that uses light energy to abstract electrons from H(2)O, generating O(2) and a proton gradient subsequently used for ATP formation. It consists of a core antenna complex that captures photons, and an electron transfer chain that converts photonic excitation into a charge separation. The D1/D2 (PsbA/PsbD) reaction center heterodimer binds P680, the primary electron donor of PSII as well as several subsequent electron acceptors. D2 is needed for assembly of a stable PSII complex. The protein is Photosystem II D2 protein of Platanus occidentalis (Sycamore).